We begin with the raw amino-acid sequence, 125 residues long: uncharacterized protein (125 aa).

In terms of domain architecture, HTH hxlR-type spans 14 to 112 (CPVEFTLDVI…WGESNRDVLE (99 aa)).

This is an uncharacterized protein from Bacillus subtilis (strain 168).